Here is a 307-residue protein sequence, read N- to C-terminus: Probable GTP 3',8-cyclase (307 aa).

The region spanning 5-231 is the Radical SAM core domain; the sequence is RFGRPVTNLR…MHRRKKYFIP (227 aa). Arg14 lines the GTP pocket. Residues Cys21, Cys25, and Cys28 each coordinate [4Fe-4S] cluster. Residue Lys62 participates in GTP binding. Gly66 provides a ligand contact to S-adenosyl-L-methionine. Thr91 lines the GTP pocket. Residue Ser115 coordinates S-adenosyl-L-methionine. Lys151 contacts GTP. Met190 serves as a coordination point for S-adenosyl-L-methionine. Residues Cys251 and Cys254 each coordinate [4Fe-4S] cluster. Residue 256–258 coordinates GTP; that stretch reads RLR. Cys268 contributes to the [4Fe-4S] cluster binding site.

This sequence belongs to the radical SAM superfamily. MoaA family. [4Fe-4S] cluster is required as a cofactor.

The catalysed reaction is GTP + AH2 + S-adenosyl-L-methionine = (8S)-3',8-cyclo-7,8-dihydroguanosine 5'-triphosphate + 5'-deoxyadenosine + L-methionine + A + H(+). The protein operates within cofactor biosynthesis; molybdopterin biosynthesis. In terms of biological role, catalyzes the cyclization of GTP to (8S)-3',8-cyclo-7,8-dihydroguanosine 5'-triphosphate. This is Probable GTP 3',8-cyclase from Thermococcus kodakarensis (strain ATCC BAA-918 / JCM 12380 / KOD1) (Pyrococcus kodakaraensis (strain KOD1)).